The primary structure comprises 172 residues: Shikimate kinase (172 aa).

ATP is bound at residue 14–19; the sequence is GAGKST. A Mg(2+)-binding site is contributed by serine 18. Residues aspartate 36, arginine 60, and glycine 82 each coordinate substrate. ATP is bound at residue arginine 120. Arginine 139 is a binding site for substrate. Residue glutamine 156 coordinates ATP.

Belongs to the shikimate kinase family. Monomer. It depends on Mg(2+) as a cofactor.

The protein resides in the cytoplasm. The enzyme catalyses shikimate + ATP = 3-phosphoshikimate + ADP + H(+). It participates in metabolic intermediate biosynthesis; chorismate biosynthesis; chorismate from D-erythrose 4-phosphate and phosphoenolpyruvate: step 5/7. Catalyzes the specific phosphorylation of the 3-hydroxyl group of shikimic acid using ATP as a cosubstrate. This is Shikimate kinase from Aliivibrio fischeri (strain ATCC 700601 / ES114) (Vibrio fischeri).